A 101-amino-acid polypeptide reads, in one-letter code: NAD(P)H-quinone oxidoreductase subunit 4L, chloroplastic (101 aa).

3 helical membrane passes run 2–22, 32–52, and 61–81; these read MLEY…YGLI, MCLE…SDFF, and ILSI…PAIV.

Belongs to the complex I subunit 4L family. In terms of assembly, NDH is composed of at least 16 different subunits, 5 of which are encoded in the nucleus.

The protein resides in the plastid. It is found in the chloroplast thylakoid membrane. It carries out the reaction a plastoquinone + NADH + (n+1) H(+)(in) = a plastoquinol + NAD(+) + n H(+)(out). The enzyme catalyses a plastoquinone + NADPH + (n+1) H(+)(in) = a plastoquinol + NADP(+) + n H(+)(out). In terms of biological role, NDH shuttles electrons from NAD(P)H:plastoquinone, via FMN and iron-sulfur (Fe-S) centers, to quinones in the photosynthetic chain and possibly in a chloroplast respiratory chain. The immediate electron acceptor for the enzyme in this species is believed to be plastoquinone. Couples the redox reaction to proton translocation, and thus conserves the redox energy in a proton gradient. This Populus alba (White poplar) protein is NAD(P)H-quinone oxidoreductase subunit 4L, chloroplastic.